The primary structure comprises 205 residues: Guanylate kinase (205 aa).

The Guanylate kinase-like domain maps to 17–195; the sequence is SRLLVLSGPS…AVEAVERLLF (179 aa). 24–31 is an ATP binding site; that stretch reads GPSGVGKD.

It belongs to the guanylate kinase family.

It is found in the cytoplasm. The enzyme catalyses GMP + ATP = GDP + ADP. Its function is as follows. Essential for recycling GMP and indirectly, cGMP. The chain is Guanylate kinase from Gloeobacter violaceus (strain ATCC 29082 / PCC 7421).